We begin with the raw amino-acid sequence, 182 residues long: Probable tyrosine phosphatase protein H4 (182 aa).

The 182-residue stretch at 1–182 (MEINKFICSQ…TVLKIQKSKI (182 aa)) folds into the Tyrosine-protein phosphatase domain. Residue Cys142 is the Phosphocysteine intermediate of the active site.

This sequence belongs to the protein-tyrosine phosphatase family.

The enzyme catalyses O-phospho-L-tyrosyl-[protein] + H2O = L-tyrosyl-[protein] + phosphate. This Microplitis demolitor (Parasitoid wasp) protein is Probable tyrosine phosphatase protein H4 (H5).